The primary structure comprises 614 residues: Putative ankyrin repeat protein RBE_0997 (614 aa).

9 ANK repeats span residues Lys3–Ile32, Asp36–Ala65, Asp69–Leu98, Arg102–Ala131, Ser135–Leu164, Asp168–Ala197, Asp201–Lys231, Asn239–Ile268, and Ala272–Glu301. One can recognise a Glutamine amidotransferase type-1 domain in the interval Asn348–Lys580. The Nucleophile role is filled by Cys444. Active-site residues include His547 and Glu549.

The protein is Putative ankyrin repeat protein RBE_0997 of Rickettsia bellii (strain RML369-C).